The chain runs to 445 residues: Phosphoglucosamine mutase (445 aa).

The active-site Phosphoserine intermediate is the S102. The Mg(2+) site is built by S102, D241, D243, and D245. A Phosphoserine modification is found at S102.

This sequence belongs to the phosphohexose mutase family. The cofactor is Mg(2+). Activated by phosphorylation.

The catalysed reaction is alpha-D-glucosamine 1-phosphate = D-glucosamine 6-phosphate. Catalyzes the conversion of glucosamine-6-phosphate to glucosamine-1-phosphate. This chain is Phosphoglucosamine mutase, found in Aliivibrio fischeri (strain MJ11) (Vibrio fischeri).